Here is a 341-residue protein sequence, read N- to C-terminus: Fructose-1,6-bisphosphatase, cytosolic (341 aa).

Mg(2+)-binding residues include E71, E100, D121, L123, and D124. Substrate is bound by residues 124 to 127 (DGSS), N215, Y247, Y267, and K277. E283 contributes to the Mg(2+) binding site.

It belongs to the FBPase class 1 family. Mg(2+) is required as a cofactor.

It is found in the cytoplasm. It localises to the nucleus. The catalysed reaction is beta-D-fructose 1,6-bisphosphate + H2O = beta-D-fructose 6-phosphate + phosphate. Its function is as follows. Catalyzes the first irreversible reaction from fructose-1,6-bisphosphate to fructose-6-phosphate and inorganic phosphate and plays an important regulatory role in sucrose biosynthesis and metabolism. Its activity is essential to regulate starch levels. Functions in fructose-mediated signaling independently of its catalytic activity in sugar metabolism. May act downstream of ABA2/GIN1, which is involved in abscisic acid (ABA) synthesis to regulate autotrophic transition and modulate early seedling establishment after seed germination. In Arabidopsis thaliana (Mouse-ear cress), this protein is Fructose-1,6-bisphosphatase, cytosolic.